A 1053-amino-acid polypeptide reads, in one-letter code: Integrin alpha-3 (1053 aa).

Residues 1 to 32 (MGPGPCRVPRAPGWLLRALALMVAACGRVAFA) form the signal peptide. Topologically, residues 33–993 (FNLDTRFLVV…LVEELPAEIE (961 aa)) are extracellular. 7 FG-GAP repeats span residues 38-103 (RFLV…KDDC), 110-171 (EKSD…DLQL), 185-235 (CNSN…WDLS), 236-293 (EYSY…GGDL), 294-355 (QRKQ…ASFP), 357-412 (QPSL…GLLR), and 416-478 (QIIH…VARP). Asparagine 86 is a glycosylation site (N-linked (GlcNAc...) asparagine). 3 disulfide bridges follow: cysteine 94/cysteine 103, cysteine 140/cysteine 162, and cysteine 185/cysteine 197. Cystine bridges form between cysteine 486–cysteine 491 and cysteine 497–cysteine 551. N-linked (GlcNAc...) asparagine glycans are attached at residues asparagine 501, asparagine 512, asparagine 574, and asparagine 606. Cysteine 616 and cysteine 622 form a disulfide bridge. N-linked (GlcNAc...) asparagine glycosylation is found at asparagine 657, asparagine 699, asparagine 843, and asparagine 859. Cysteine 695 and cysteine 704 are joined by a disulfide. Intrachain disulfides connect cysteine 848-cysteine 906 and cysteine 913-cysteine 918. The interval 865–890 (PGVTPLSPQRRRRQLDPGGDQSSPPV) is disordered. N-linked (GlcNAc...) asparagine glycans are attached at residues asparagine 925, asparagine 928, asparagine 937, and asparagine 971. The chain crosses the membrane as a helical span at residues 994–1021 (LWLVLVAVGAGLLLLGLIILLLWKCGFF). Cysteine 1018 carries S-palmitoyl cysteine lipidation. The Cytoplasmic segment spans residues 1022-1053 (KRARTRALYEAKRQKAEMKSQPSETERLTDDY).

The protein belongs to the integrin alpha chain family. Heterodimer of an alpha and a beta subunit. The alpha subunit is composed of a heavy and a light chain linked by a disulfide bond. Alpha-3 associates with beta-1. Interacts with HPS5. Interacts with FAP (seprase); the interaction occurs at the cell surface of invadopodia membrane in a collagen-dependent manner. Isoform 1 and isoform 2 are expressed in heart and brain. Only isoform 1 is detected in lung.

It is found in the cell membrane. Its subcellular location is the cell projection. The protein localises to the invadopodium membrane. The protein resides in the filopodium membrane. In terms of biological role, integrin alpha-3/beta-1 is a receptor for fibronectin, laminin, collagen, epiligrin, thrombospondin and CSPG4. Integrin alpha-3/beta-1 provides a docking site for FAP (seprase) at invadopodia plasma membranes in a collagen-dependent manner and hence may participate in the adhesion, formation of invadopodia and matrix degradation processes, promoting cell invasion. Alpha-3/beta-1 may mediate with LGALS3 the stimulation by CSPG4 of endothelial cells migration. The chain is Integrin alpha-3 (Itga3) from Mus musculus (Mouse).